We begin with the raw amino-acid sequence, 90 residues long: Conotoxin Ca8.2 (90 aa).

An N-terminal signal peptide occupies residues 1-21 (MMLKMGAMFVLLLLFILPSSQ). The propeptide occupies 22–46 (QEGDVQARKTHLKRGFYGTLAMSTR). Q89 carries the post-translational modification Glutamine amide.

Belongs to the conotoxin S superfamily. Contains 5 disulfide bonds. In terms of tissue distribution, expressed by the venom duct.

Its subcellular location is the secreted. In Conus caracteristicus (Characteristic cone), this protein is Conotoxin Ca8.2.